Reading from the N-terminus, the 119-residue chain is Phospholipase A2 A2-actitoxin-Cgg2a (119 aa).

6 disulfide bridges follow: C25/C119, C27/C43, C42/C101, C49/C94, C61/C87, and C78/C92. Ca(2+)-binding residues include G28 and G30. Residue H46 is part of the active site. D47 serves as a coordination point for Ca(2+). D95 is an active-site residue.

The protein belongs to the phospholipase A2 family. As to quaternary structure, homodimer. Ca(2+) serves as cofactor.

Its subcellular location is the secreted. It is found in the nematocyst. It catalyses the reaction a 1,2-diacyl-sn-glycero-3-phosphocholine + H2O = a 1-acyl-sn-glycero-3-phosphocholine + a fatty acid + H(+). In terms of biological role, sea anemone phospholipase A2 (PLA2). When incubated with plasma, this protein shows a moderate anticoagulant activity (0.15 ug of enzyme/200 uL of plasma), inhibiting clotting induced by thrombin. This enzyme also induces myotoxicity, and edema. PLA2 catalyzes the calcium-dependent hydrolysis of the 2-acyl groups in 3-sn-phosphoglycerides. The chain is Phospholipase A2 A2-actitoxin-Cgg2a from Condylactis gigantea (Giant Caribbean anemone).